A 104-amino-acid polypeptide reads, in one-letter code: Large ribosomal subunit protein uL24 (104 aa).

This sequence belongs to the universal ribosomal protein uL24 family. In terms of assembly, part of the 50S ribosomal subunit.

One of two assembly initiator proteins, it binds directly to the 5'-end of the 23S rRNA, where it nucleates assembly of the 50S subunit. In terms of biological role, one of the proteins that surrounds the polypeptide exit tunnel on the outside of the subunit. This is Large ribosomal subunit protein uL24 from Enterobacter sp. (strain 638).